Reading from the N-terminus, the 1679-residue chain is [F-actin]-monooxygenase mical2b (1679 aa).

Positions 2–494 are monooxygenase domain; it reads GETEEERTSQ…RHLFISGEQD (493 aa). Residues Cys97, 97-125, Glu116, Arg118, Arg123, Asn125, and Asp398 contribute to the FAD site; that span reads CGFR…SRNN. In terms of domain architecture, Calponin-homology (CH) spans 516–619; the sequence is EVRPGRLLLW…MVLYLSKFYE (104 aa). A Nuclear localization signal motif is present at residues 658–679; sequence RKRIPKLDKKLEESDVNRKRKK. Disordered regions lie at residues 661-772, 818-838, 874-907, 1073-1163, 1194-1247, 1259-1283, 1302-1342, and 1473-1509; these read IPKL…KAKW, SAYK…TPTL, SSLF…ESST, STRH…RSTA, KPED…DEIP, EYPK…ISFS, DLTN…PAPP, and RNKA…KKKE. Composition is skewed to basic and acidic residues over residues 662–674 and 697–707; these read PKLD…SDVN and GEREEQKENKV. Over residues 874–888 the composition is skewed to polar residues; sequence SSLFTGNPAQPQTDE. The region spanning 1011 to 1073 is the LIM zinc-binding domain; it reads DTCVFCQKRV…KMHFSQRKTS (63 aa). Positions 1086-1099 are enriched in low complexity; it reads IRSSSITISNHTST. A compositionally biased stretch (polar residues) spans 1112-1123; the sequence is DSSTQQDLQTLP. The span at 1133 to 1143 shows a compositional bias: basic and acidic residues; it reads EVKDSSKKADP. A compositionally biased stretch (low complexity) spans 1144–1154; it reads ADSAPACPDSP. The span at 1202-1211 shows a compositional bias: acidic residues; sequence LAEEDGNSDF. Polar residues predominate over residues 1220 to 1242; it reads SKKPSNPSTDSNCLPTKDNSSTP. The span at 1259-1270 shows a compositional bias: low complexity; the sequence is EYPKPSSSSPEP. Over residues 1302–1325 the composition is skewed to polar residues; the sequence is DLTNPGKSGAEEQQQQHVKPSISL. Pro residues predominate over residues 1333-1342; it reads THPQPEPAPP. Residues 1475–1489 show a composition bias toward low complexity; sequence KASAQQQQQQKSNSS. A bMERB domain is found at 1517-1667; that stretch reads KSDELKRLHR…EKAEDRDLES (151 aa).

This sequence belongs to the Mical family. The cofactor is FAD.

It is found in the nucleus. The protein localises to the cytoplasm. The enzyme catalyses L-methionyl-[F-actin] + NADPH + O2 + H(+) = L-methionyl-(R)-S-oxide-[F-actin] + NADP(+) + H2O. In terms of biological role, nuclear monooxygenase that promotes depolymerization of F-actin by mediating oxidation of specific methionine residues on actin and regulates the srf signaling. Acts by modifying nuclear actin subunits through the addition of oxygen to form methionine-sulfoxide, leading to promote actin filament severing and prevent repolymerization. Acts as a key regulator of the srf signaling pathway elicited by nerve growth factor and serum: mediates oxidation and subsequent depolymerization of nuclear actin, leading to increase mkl1/mrtf-a presence in the nucleus and promote srf:mkl1/mrtf-a-dependent gene transcription. The protein is [F-actin]-monooxygenase mical2b of Danio rerio (Zebrafish).